The chain runs to 1545 residues: MTGIKAQVHPPPDSTLFHEEEKKKVGGNLPQKVINQQERGSDHAPSGHHQYHQLINHDANDTKTSNSVSDVSKGQKTADSNPEGKKQSSKDIFVASSAQKTNQLPGPNPQGSIGAVPLEGLRPKEFRSAPSRKPNKFDTSITKPGVLDDLGKLDEKDIKEKFHLDSDDKLFPWQNVGEFHASGKGSPNTKMSRVIKAYILENFYNDWYCNIATVLGTCFFSWLFAYIGFSWWSMIFIFLGTATVYNAEYTRFNRNIRDDLKRVTVEETLSDRVESTTWLNSFLSKFWVIYMPVLSQQVKDNVNPQLAGVAPGYGIDALAIDEFTLGSKAPTIKGIKSYTKTGKNTVEMDWSFAFTPSDVSDMTATEAREKINPKISLGVTLGKSFVSKTMPILVEDINVAGKMRIKVEFGKAFPNIKIVSLQLLEPPLIDFALKPIGGDTLGLDVMSFLPGLKSFVKNIINSNIGPMLFPPNHLDINVEDIMAAQSKEAIGVLAVTIASADSLKGSDFITNTVDPYIVMTTEDAVPGTDEEVRTSIKSNVKNPRWNETKYLLLNTLEQKLNLKCFDFNDVRKDTVIGDLQLDLADLLQNPVLDNQTAELRSGTKSKGILHYSLHWFPVKEDKSEEKAVERAEAKAKGKKEDENEDTTEKEEDENEESSQTDVGIAKITLQKVKYLDTTSSMTGSLSPCAELFIDGQKVKSYRTLRRINEPSWNETIEVLVPSKSNSKFVLKIFDDRMNGKALICEYSSSLDDIMTTLDTAQEFVKGSPQGDIYLDVSWKSIEMTGAFAAANSVSEPIGCIKLDVKDAIIKGDLSGVGDVDPYYTVSLNRRVLYKSIYHSDTDHPIFDNSTYVPIFSPNQILTLEFHDYQKIGKDRFIGSVQIPTSNVFKKDPKSGKYVGNNGKEEISKLKLKDHEHKVTESIVNVSTTFIPINLVYSPEELVNVEKLEKELKEKKKKFEATQEENEQEMEKNPKEWEVAEIEDPFDSDEKKINRKAKLSLNELIKQKSGILSMQILEGTLSPSSAYLEILADDISYPVFICMKPSQGKLNSEMANIFIRDLNYSKLHFRVSKKHIAKDSDDVISETSYSTLKLLKQAYEEPMWLNFNGSKMKVRFLYTPTSVKLPSSESVEDTGYLNIKLISGHGLKSADRNGYSDPFVHIFVNDKKVFKSNIKKKTLDPVWNEDAKIPILSRSKNQVIFNVLDWDRAGDNDDLGQASLDVSSLEVGKTYNWNLNLNTQGSIKLQGSFNPEYIKPSFDIVKGGITDKPMKIASGAAHATVGIAGTGIGAATGVATGGLKKGGHLLKSLGGNPMKRSKSSNGNESNGAKKSSEKKSFDRRSPSNLNSTSVTPRASLDYDPSVPNTSYAPVQSASPVVKPTDNTSSSSNKKDTPSSNSRGHSRASSFARTLAPHGTYNGFITVVAAENVAKHVQIKISLTQGGRLKHIYKTKSQKANNDGVAVFDEECSFKASPEANLVLGAISHQRLSRDKDLGIAQINLGDPQIQQDGQISVKLGDGHLIVKINYGKDKNGQVPPVPEVPQEYTQ.

A disordered region spans residues M1 to S89. Residues M1–D206 lie on the Cytoplasmic side of the membrane. Polar residues predominate over residues T62–S80. 2 positions are modified to phosphoserine: S67 and S112. The helical transmembrane segment at W207–I227 threads the bilayer. Residue G228 is a topological domain, extracellular. Residues F229–Y249 form a helical membrane-spanning segment. Topologically, residues T250–Q1545 are cytoplasmic. One can recognise an SMP-LTD domain in the interval R272 to E479. Residues P470–T596 enclose the C2 1 domain. The stretch at E620–T660 forms a coiled coil. Residues E624–D641 show a composition bias toward basic and acidic residues. The interval E624 to T660 is disordered. The span at E642 to S658 shows a compositional bias: acidic residues. 2 C2 domains span residues T646–F763 and M783–Y897. Residues S937–N972 adopt a coiled-coil conformation. Residues P1119–L1234 enclose the C2 4 domain. 5 residues coordinate Ca(2+): D1150, D1156, D1204, D1206, and D1212. The disordered stretch occupies residues L1304–S1404. Positions S1318–K1328 are enriched in polar residues. Basic and acidic residues predominate over residues K1329 to S1340. A phosphoserine mark is found at S1340, S1342, and S1346. Over residues P1341–P1351 the composition is skewed to polar residues. T1350 carries the post-translational modification Phosphothreonine. S1354 is subject to Phosphoserine. The span at V1361–S1373 shows a compositional bias: polar residues. Over residues K1377–S1404 the composition is skewed to low complexity. Residues S1396–L1514 form the C2 5 domain. Position 1400 is a phosphoserine (S1400).

The protein belongs to the tricalbin family. Interacts with TCB2 via its C-terminal domain. Ca(2+) serves as cofactor.

It localises to the cell membrane. The protein resides in the endoplasmic reticulum membrane. May play a role in membrane trafficking. This chain is Tricalbin-3 (TCB3), found in Saccharomyces cerevisiae (strain ATCC 204508 / S288c) (Baker's yeast).